Reading from the N-terminus, the 386-residue chain is Diels-Alderase phm7 (386 aa).

The beta-sandwich motif stretch occupies residues Met1–Trp223. Residues Glu51, Asn84, and Lys356 each coordinate substrate. Residues Trp223–Pro386 are beta-barrel motif.

It belongs to the Diels-Alderase family.

Its pathway is secondary metabolite biosynthesis. 3-aminomethyl-p-menthane which is similar to the phomasetin substructure, dose-dependently inhibits phm7 activity in vitro and production of phomasetin in the fungus. Diels-Alderase; part of the gene cluster that mediates the biosynthesis of the trans-fused decalin-containing tetramic acid phomasetin, the stereochemical opposite of the HIV-1 integrase inhibitor equisetin. The PKS module of phm1 together with the enoylreductase phm4 catalyze the formation of the polyketide unit which is then conjugated to L-serine by the condensation domain of the phm1 NRPS module. Activity of the Dieckmann cyclase domain (RED) of phm1 results in release of the Dieckmann product intermediate. The Diels-Alderase phm7 then uses the Dieckmann product of phm1 as substrate and catalyzes the Diels-Alder cycloaddition to form the decalin ring of N-desmethylphomasetin. N-desmethylphomasetin is further methylated to phomasetin by the methyltransferase phm5. This is Diels-Alderase phm7 from Pyrenochaetopsis sp.